A 1596-amino-acid chain; its full sequence is A-kinase anchor protein SPHKAP (1596 aa).

Disordered regions lie at residues 214-233 (KHGR…RSVS), 242-319 (ASEQ…TPKQ), 389-432 (DNSE…GHPA), 462-481 (SGEE…DQGE), and 760-809 (EQSD…SSSS). Positions 292 to 306 (TLCTSSNSQKLSRTY) are enriched in polar residues. Residues 462 to 479 (SGEEYECEDEEEESETDQ) show a composition bias toward acidic residues. A PKA-RII subunit binding domain region spans residues 829 to 846 (FAEDLATTVVSMATELAA). Disordered regions lie at residues 958 to 1022 (VVDT…ISKQ), 1282 to 1310 (VGER…ENSC), and 1328 to 1443 (VPLI…SSLG). Polar residues predominate over residues 959 to 971 (VDTSKSGQSSRSR). A compositionally biased stretch (basic and acidic residues) spans 1333 to 1356 (IEPDQREEASEEKGGVETHHREAS). The span at 1357-1372 (HQTQQQSGKGSETATK) shows a compositional bias: polar residues. Low complexity-rich tracts occupy residues 1398 to 1409 (LSASSEESGSGS) and 1430 to 1443 (LSEG…SSLG).

Belongs to the AKAP110 family.

The protein localises to the cytoplasm. In terms of biological role, anchoring protein that mediates the subcellular compartmentation of cAMP-dependent protein kinase (PKA type II). The protein is A-kinase anchor protein SPHKAP (sphkap) of Danio rerio (Zebrafish).